We begin with the raw amino-acid sequence, 350 residues long: Methionine import ATP-binding protein MetN (350 aa).

In terms of domain architecture, ABC transporter spans 2–241 (IQIKNLKKEY…PQAPVTRSFV (240 aa)). 38 to 45 (GHSGAGKS) is an ATP binding site.

The protein belongs to the ABC transporter superfamily. Methionine importer (TC 3.A.1.24) family. In terms of assembly, the complex is composed of two ATP-binding proteins (MetN), two transmembrane proteins (MetI) and a solute-binding protein (MetQ).

The protein localises to the cell inner membrane. It carries out the reaction L-methionine(out) + ATP + H2O = L-methionine(in) + ADP + phosphate + H(+). It catalyses the reaction D-methionine(out) + ATP + H2O = D-methionine(in) + ADP + phosphate + H(+). In terms of biological role, part of the ABC transporter complex MetNIQ involved in methionine import. Responsible for energy coupling to the transport system. In Francisella tularensis subsp. tularensis (strain SCHU S4 / Schu 4), this protein is Methionine import ATP-binding protein MetN.